Here is a 191-residue protein sequence, read N- to C-terminus: MYPSAPPDAYNKFSAGAPPTAPPPPAAYHQQQQQHGANMDTSRPGGGLRKWSTGLFHCMDDPGNCLITCLCPCVTFGQVADIVDKGTCPCIASGLVYGLICASTGMGCLYSCLYRSKLRAEYDLDEGECPDILVHCCCEHLALCQEYRELKNRGFDLGIGWEANMDRQRRGVAGGGAVMGAPPAIPLGMIR.

The segment at 13–44 is disordered; sequence FSAGAPPTAPPPPAAYHQQQQQHGANMDTSRP. The segment covering 27–37 has biased composition (low complexity); the sequence is AYHQQQQQHGA. A helical membrane pass occupies residues 91–113; that stretch reads IASGLVYGLICASTGMGCLYSCL.

The protein belongs to the cornifelin family. Expressed in roots, coleoptiles, stalks and silks. Detected in leaves, apical meristems, immature ears and pericarps. Highest expression in coleoptiles and silks.

It localises to the membrane. Its function is as follows. Acts as a negative regulator of cell number. This is Cell number regulator 1 (CNR1) from Zea mays (Maize).